Consider the following 154-residue polypeptide: 6,7-dimethyl-8-ribityllumazine synthase (154 aa).

5-amino-6-(D-ribitylamino)uracil is bound by residues phenylalanine 26, 60-62, and 84-86; these read ALE and CII. 89-90 lines the (2S)-2-hydroxy-3-oxobutyl phosphate pocket; sequence ET. The Proton donor role is filled by histidine 92. 5-amino-6-(D-ribitylamino)uracil is bound at residue asparagine 117. A (2S)-2-hydroxy-3-oxobutyl phosphate-binding site is contributed by arginine 131.

This sequence belongs to the DMRL synthase family.

It catalyses the reaction (2S)-2-hydroxy-3-oxobutyl phosphate + 5-amino-6-(D-ribitylamino)uracil = 6,7-dimethyl-8-(1-D-ribityl)lumazine + phosphate + 2 H2O + H(+). Its pathway is cofactor biosynthesis; riboflavin biosynthesis; riboflavin from 2-hydroxy-3-oxobutyl phosphate and 5-amino-6-(D-ribitylamino)uracil: step 1/2. Functionally, catalyzes the formation of 6,7-dimethyl-8-ribityllumazine by condensation of 5-amino-6-(D-ribitylamino)uracil with 3,4-dihydroxy-2-butanone 4-phosphate. This is the penultimate step in the biosynthesis of riboflavin. The chain is 6,7-dimethyl-8-ribityllumazine synthase from Paracidovorax citrulli (strain AAC00-1) (Acidovorax citrulli).